Reading from the N-terminus, the 186-residue chain is MNTADAANELGVSTKTVQRWVKQLQLPASRNELGHYFFTEDDIAILKEVKEQLKNGTPMQDVTVKRPKKTFFIKKNEMIQTKEPALQLNERLEERLQRFLEHEQLERELLQKKIAELERKLEQKADEVVSYQLLQQRRELEEERQQIKHLEQKISQLESMNRREKDTAVRREEKKPKSKLKSIFSF.

Positions 3–23 form a DNA-binding region, H-T-H motif; sequence TADAANELGVSTKTVQRWVKQ. Residues 90 to 170 are a coiled coil; the sequence is ERLEERLQRF…NRREKDTAVR (81 aa). The tract at residues 158 to 186 is disordered; it reads ESMNRREKDTAVRREEKKPKSKLKSIFSF. A compositionally biased stretch (basic and acidic residues) spans 160–175; sequence MNRREKDTAVRREEKK.

The protein belongs to the RacA family.

It is found in the cytoplasm. Required for the formation of axial filaments and for anchoring the origin regions at the cell poles in sporulating cells, thus ensuring proper chromosome segregation in the prespore. Binds in a dispersed manner throughout the chromosome but preferentially to sites clustered in the origin portion of the chromosome, causing condensation of the chromosome and its remodeling into an elongated, anchored structure. This chain is Chromosome-anchoring protein RacA, found in Bacillus licheniformis (strain ATCC 14580 / DSM 13 / JCM 2505 / CCUG 7422 / NBRC 12200 / NCIMB 9375 / NCTC 10341 / NRRL NRS-1264 / Gibson 46).